We begin with the raw amino-acid sequence, 414 residues long: Esterase FrsA (414 aa).

This sequence belongs to the FrsA family.

The enzyme catalyses a carboxylic ester + H2O = an alcohol + a carboxylate + H(+). Its function is as follows. Catalyzes the hydrolysis of esters. The protein is Esterase FrsA of Klebsiella pneumoniae subsp. pneumoniae (strain ATCC 700721 / MGH 78578).